The following is a 440-amino-acid chain: Chromosome partition protein MukF (440 aa).

Residues 208–236 (LSETSGTLRELQDTLEAAGDKLQANLLRI) are leucine-zipper.

Belongs to the MukF family. Interacts, and probably forms a ternary complex, with MukE and MukB via its C-terminal region. The complex formation is stimulated by calcium or magnesium. It is required for an interaction between MukE and MukB.

The protein resides in the cytoplasm. Its subcellular location is the nucleoid. Its function is as follows. Involved in chromosome condensation, segregation and cell cycle progression. May participate in facilitating chromosome segregation by condensation DNA from both sides of a centrally located replisome during cell division. Not required for mini-F plasmid partitioning. Probably acts via its interaction with MukB and MukE. Overexpression results in anucleate cells. It has a calcium binding activity. In Yersinia pestis, this protein is Chromosome partition protein MukF.